A 745-amino-acid chain; its full sequence is Capsid protein (745 aa).

Disordered regions lie at residues 44 to 64 (RRRF…GRRK), 580 to 602 (SQAI…TLPR), 638 to 662 (EYSS…RPEG), and 678 to 699 (QDSQ…QAHQ). Acidic residues predominate over residues 681–692 (QDSEESQEEAPL).

The protein belongs to the anelloviridae capsid protein family.

It is found in the virion. Its function is as follows. Self assemble to form an icosahedral capsid. This Torque teno virus (isolate Human/China/CT23F/2001) (TTV) protein is Capsid protein.